The sequence spans 359 residues: S-adenosylmethionine:tRNA ribosyltransferase-isomerase (359 aa).

This sequence belongs to the QueA family. In terms of assembly, monomer.

The protein resides in the cytoplasm. It carries out the reaction 7-aminomethyl-7-carbaguanosine(34) in tRNA + S-adenosyl-L-methionine = epoxyqueuosine(34) in tRNA + adenine + L-methionine + 2 H(+). It functions in the pathway tRNA modification; tRNA-queuosine biosynthesis. Functionally, transfers and isomerizes the ribose moiety from AdoMet to the 7-aminomethyl group of 7-deazaguanine (preQ1-tRNA) to give epoxyqueuosine (oQ-tRNA). This Ralstonia pickettii (strain 12J) protein is S-adenosylmethionine:tRNA ribosyltransferase-isomerase.